We begin with the raw amino-acid sequence, 253 residues long: uncharacterized protein (253 aa).

This is an uncharacterized protein from Escherichia coli O6:H1 (strain CFT073 / ATCC 700928 / UPEC).